The primary structure comprises 713 residues: Polyribonucleotide nucleotidyltransferase (713 aa).

Positions 485 and 491 each coordinate Mg(2+). A KH domain is found at 552 to 611 (PRIHTIKINPEKIKDVIGKGGSVIRALTEETGTNIELDDDGTVRISAVANEAAMEAIRRI). In terms of domain architecture, S1 motif spans 621 to 689 (NRIYEGKVVR…RQGRVRLSIK (69 aa)).

It belongs to the polyribonucleotide nucleotidyltransferase family. Component of the RNA degradosome, which is a multiprotein complex involved in RNA processing and mRNA degradation. The cofactor is Mg(2+).

The protein resides in the cytoplasm. The enzyme catalyses RNA(n+1) + phosphate = RNA(n) + a ribonucleoside 5'-diphosphate. In terms of biological role, involved in mRNA degradation. Catalyzes the phosphorolysis of single-stranded polyribonucleotides processively in the 3'- to 5'-direction. This Aeromonas salmonicida (strain A449) protein is Polyribonucleotide nucleotidyltransferase.